A 314-amino-acid polypeptide reads, in one-letter code: Zinc transporter ZIP3 (314 aa).

At 1-3 (MVK) the chain is on the extracellular side. Residues 4-24 (LLVAKILCMVGMFFFMLLGSL) form a helical membrane-spanning segment. The Cytoplasmic segment spans residues 25 to 42 (LPVKIIEMDFEKAHRSKK). A helical membrane pass occupies residues 43-63 (ILSLCNTFGGGVFLATCFNAL). The Extracellular portion of the chain corresponds to 64-85 (LPAVREKLKEVLTLAHISTDYP). A helical membrane pass occupies residues 86 to 106 (LAETIMLLGFFMTVFLEQLVL). The Cytoplasmic portion of the chain corresponds to 107-169 (TFRKERPAFI…QELSRSSPLR (63 aa)). A phosphoserine mark is found at serine 125 and serine 129. Residues 170 to 190 (LLSLVFALSAHSVFEGLALGL) traverse the membrane as a helical segment. Residues 191–196 (QEEGEK) lie on the Extracellular side of the membrane. A helical transmembrane segment spans residues 197–217 (VVSLFVGVAIHETLVAVALGI). The Cytoplasmic portion of the chain corresponds to 218-229 (NMARSAMALRDA). Residues 230-250 (AKLAVTVSAMIPLGISLGLGI) form a helical membrane-spanning segment. At 251–262 (DSAQGMPSSVAS) the chain is on the extracellular side. Residues 263–283 (VLLQGLAGGTFLFVTFFEILA) traverse the membrane as a helical segment. The Cytoplasmic segment spans residues 284–292 (KELEEKSDR). Residues 293–313 (LLKVLFLVLGYTVLAGMVFIK) traverse the membrane as a helical segment. A topological domain (extracellular) is located at residue tryptophan 314.

This sequence belongs to the ZIP transporter (TC 2.A.5) family.

The protein resides in the cell membrane. The protein localises to the apical cell membrane. It catalyses the reaction Zn(2+)(in) = Zn(2+)(out). Its function is as follows. Transporter for the divalent cation Zn(2+). Mediates the influx of Zn(2+) into cells from extracellular space. Controls Zn(2+) accumulation into dentate gyrus granule cells in the hippocampus. Mediates Zn(2+) reuptake from the secreted milk within the alveolar lumen. The polypeptide is Zinc transporter ZIP3 (SLC39A3) (Bos taurus (Bovine)).